Consider the following 395-residue polypeptide: Accessory Sec system protein translocase subunit SecY2 (395 aa).

The next 10 membrane-spanning stretches (helical) occupy residues Val-13 to Phe-33, Ile-63 to Leu-83, Leu-102 to Phe-122, Gly-128 to Leu-148, Val-157 to Ile-177, Trp-190 to Phe-210, Met-239 to Gly-259, Val-272 to Val-292, Leu-326 to Leu-346, and Tyr-355 to Ile-375.

The protein belongs to the SecY/SEC61-alpha family. SecY2 subfamily. Component of the accessory SecA2/SecY2 protein translocase complex required to export cell wall proteins. May form heterotrimers with SecE and SecG subunits.

Its subcellular location is the cell membrane. Functionally, part of the accessory SecA2/SecY2 system specifically required for export of possible cell wall proteins. The central subunit of a protein translocation channel. The polypeptide is Accessory Sec system protein translocase subunit SecY2 (Lactobacillus johnsonii (strain CNCM I-12250 / La1 / NCC 533)).